A 161-amino-acid polypeptide reads, in one-letter code: Regulator of ribonuclease activity A (161 aa).

It belongs to the RraA family. In terms of assembly, homotrimer. Binds to both RNA-binding sites in the C-terminal region of Rne and to RhlB.

It is found in the cytoplasm. Globally modulates RNA abundance by binding to RNase E (Rne) and regulating its endonucleolytic activity. Can modulate Rne action in a substrate-dependent manner by altering the composition of the degradosome. Modulates RNA-binding and helicase activities of the degradosome. This is Regulator of ribonuclease activity A from Shigella dysenteriae serotype 1 (strain Sd197).